A 51-amino-acid chain; its full sequence is Putative ribosomal protein eL39-like 5 (51 aa).

The protein belongs to the eukaryotic ribosomal protein eL39 family.

The polypeptide is Putative ribosomal protein eL39-like 5 (RPL39P5) (Homo sapiens (Human)).